Consider the following 320-residue polypeptide: Lipoyl synthase (320 aa).

[4Fe-4S] cluster is bound by residues Cys-67, Cys-72, Cys-78, Cys-93, Cys-97, Cys-100, and Ser-307. In terms of domain architecture, Radical SAM core spans 79 to 296 (FNHGTATFMI…GVIAKEIGFT (218 aa)).

The protein belongs to the radical SAM superfamily. Lipoyl synthase family. [4Fe-4S] cluster serves as cofactor.

The protein localises to the cytoplasm. It catalyses the reaction [[Fe-S] cluster scaffold protein carrying a second [4Fe-4S](2+) cluster] + N(6)-octanoyl-L-lysyl-[protein] + 2 oxidized [2Fe-2S]-[ferredoxin] + 2 S-adenosyl-L-methionine + 4 H(+) = [[Fe-S] cluster scaffold protein] + N(6)-[(R)-dihydrolipoyl]-L-lysyl-[protein] + 4 Fe(3+) + 2 hydrogen sulfide + 2 5'-deoxyadenosine + 2 L-methionine + 2 reduced [2Fe-2S]-[ferredoxin]. It participates in protein modification; protein lipoylation via endogenous pathway; protein N(6)-(lipoyl)lysine from octanoyl-[acyl-carrier-protein]: step 2/2. Its function is as follows. Catalyzes the radical-mediated insertion of two sulfur atoms into the C-6 and C-8 positions of the octanoyl moiety bound to the lipoyl domains of lipoate-dependent enzymes, thereby converting the octanoylated domains into lipoylated derivatives. The chain is Lipoyl synthase from Pseudoalteromonas atlantica (strain T6c / ATCC BAA-1087).